The chain runs to 435 residues: NADH-quinone oxidoreductase subunit D (435 aa).

It belongs to the complex I 49 kDa subunit family. In terms of assembly, NDH-1 is composed of 14 different subunits. Subunits NuoB, C, D, E, F, and G constitute the peripheral sector of the complex.

The protein resides in the cell inner membrane. It carries out the reaction a quinone + NADH + 5 H(+)(in) = a quinol + NAD(+) + 4 H(+)(out). NDH-1 shuttles electrons from NADH, via FMN and iron-sulfur (Fe-S) centers, to quinones in the respiratory chain. The immediate electron acceptor for the enzyme in this species is believed to be ubiquinone. Couples the redox reaction to proton translocation (for every two electrons transferred, four hydrogen ions are translocated across the cytoplasmic membrane), and thus conserves the redox energy in a proton gradient. The chain is NADH-quinone oxidoreductase subunit D from Xylella fastidiosa (strain M12).